The sequence spans 140 residues: Protein E6 (140 aa).

Zinc fingers lie at residues 27–63 (CIFCSHTVDLQDLASFYLKKLSLVFRGGCYYACCSEC) and 100–136 (CICCLRLLDIVEKLDLLYSDQACYLIRGLWRGYCRNC).

Belongs to the papillomaviridae E6 protein family. In terms of assembly, forms homodimers. Interacts with ubiquitin-protein ligase UBE3A/E6-AP; this interaction stimulates UBE3A ubiquitin activity. Interacts with host BAK1.

The protein localises to the host cytoplasm. The protein resides in the host nucleus. Plays a major role in the induction and maintenance of cellular transformation. E6 associates with host UBE3A/E6-AP ubiquitin-protein ligase and modulates its activity. Protects host keratinocytes from apoptosis by mediating the degradation of host BAK1. May also inhibit host immune response. The protein is Protein E6 of Human papillomavirus 65.